Consider the following 149-residue polypeptide: Calmodulin (149 aa).

A2 is subject to N-acetylalanine. 4 EF-hand domains span residues 8–43 (EQIA…VGQN), 44–79 (PTEA…KMKD), 81–116 (DSEE…LGEK), and 117–149 (LTDE…MMSK). Residues D21, D23, D25, T27, E32, D57, D59, N61, T63, E68, D94, D96, N98, E105, D130, D132, D134, Q136, and E141 each coordinate Ca(2+).

This sequence belongs to the calmodulin family.

Its function is as follows. Calmodulin mediates the control of a large number of enzymes, ion channels and other proteins by Ca(2+). Among the enzymes to be stimulated by the calmodulin-Ca(2+) complex are a number of protein kinases and phosphatases. This is Calmodulin (CMD1) from Achlya klebsiana.